We begin with the raw amino-acid sequence, 379 residues long: Isocitrate dehydrogenase [NAD] subunit 2, mitochondrial (379 aa).

The transit peptide at 1 to 27 (MSMLSTLRTAGSLRTFSRSACYSFQRF) directs the protein to the mitochondrion. Arg129, Arg139, Arg160, and Asp247 together coordinate substrate. Positions 247, 273, and 277 each coordinate Mg(2+).

Belongs to the isocitrate and isopropylmalate dehydrogenases family. In terms of assembly, octamer of two non-identical subunits IDH1 and IDH2. Mg(2+) serves as cofactor. The cofactor is Mn(2+).

Its subcellular location is the mitochondrion. The catalysed reaction is D-threo-isocitrate + NAD(+) = 2-oxoglutarate + CO2 + NADH. Performs an essential role in the oxidative function of the citric acid cycle and is involved in glutamate biosynthesis. Also binds RNA; specifically to the 5'-untranslated leaders of mitochondrial mRNAs. In Schizosaccharomyces pombe (strain 972 / ATCC 24843) (Fission yeast), this protein is Isocitrate dehydrogenase [NAD] subunit 2, mitochondrial (idh2).